Here is a 380-residue protein sequence, read N- to C-terminus: Cytochrome b (380 aa).

Transmembrane regions (helical) follow at residues 34–54, 78–99, 114–134, and 179–199; these read FGSLLGICLMTQILTGLLLAM, WLIRNLHANGASFFFICIYLHI, WNTGIILLLTLMATAFVGYVL, and FFALHFLLPFAIAGLTLIHLT. Heme b-binding residues include H84 and H98. The heme b site is built by H183 and H197. Residue H202 coordinates a ubiquinone. Helical transmembrane passes span 227 to 247, 289 to 309, 321 to 341, and 348 to 368; these read LKDILGFALMVLPLTSLALFS, LGGVLALAASVLVLFLSPFLH, LSQLLFWILVTNLFILTWVGS, and FIIIGQLASITYFTILLILFP.

The protein belongs to the cytochrome b family. In terms of assembly, the cytochrome bc1 complex contains 11 subunits: 3 respiratory subunits (MT-CYB, CYC1 and UQCRFS1), 2 core proteins (UQCRC1 and UQCRC2) and 6 low-molecular weight proteins (UQCRH/QCR6, UQCRB/QCR7, UQCRQ/QCR8, UQCR10/QCR9, UQCR11/QCR10 and a cleavage product of UQCRFS1). This cytochrome bc1 complex then forms a dimer. Requires heme b as cofactor.

The protein localises to the mitochondrion inner membrane. Functionally, component of the ubiquinol-cytochrome c reductase complex (complex III or cytochrome b-c1 complex) that is part of the mitochondrial respiratory chain. The b-c1 complex mediates electron transfer from ubiquinol to cytochrome c. Contributes to the generation of a proton gradient across the mitochondrial membrane that is then used for ATP synthesis. This is Cytochrome b (MT-CYB) from Macronectes giganteus (Southern giant petrel).